The primary structure comprises 168 residues: Transcription antitermination protein NusB (168 aa).

This sequence belongs to the NusB family.

Functionally, involved in transcription antitermination. Required for transcription of ribosomal RNA (rRNA) genes. Binds specifically to the boxA antiterminator sequence of the ribosomal RNA (rrn) operons. The polypeptide is Transcription antitermination protein NusB (Chlamydia trachomatis serovar D (strain ATCC VR-885 / DSM 19411 / UW-3/Cx)).